The primary structure comprises 172 residues: Peptide deformylase (172 aa).

Residues Cys94 and His136 each contribute to the Fe cation site. The active site involves Glu137. His140 lines the Fe cation pocket.

It belongs to the polypeptide deformylase family. Fe(2+) serves as cofactor.

It catalyses the reaction N-terminal N-formyl-L-methionyl-[peptide] + H2O = N-terminal L-methionyl-[peptide] + formate. In terms of biological role, removes the formyl group from the N-terminal Met of newly synthesized proteins. Requires at least a dipeptide for an efficient rate of reaction. N-terminal L-methionine is a prerequisite for activity but the enzyme has broad specificity at other positions. The sequence is that of Peptide deformylase from Pelagibacter ubique (strain HTCC1062).